Consider the following 155-residue polypeptide: MINLIGTYECKVDAKGRLMVPSALKKQLAPMMQDGFVIKRAVFQNCLELYPMEEWNVLMKRMNGLNRFKKKNNDFIRRFTAGVKTVEVDTNGRLLIPKDLVGFAGIEKEIVLSSAINIVEIWDKDKYEQTLEDSSDDFADLAEEVMGNDDFDGVS.

2 SpoVT-AbrB domains span residues 7–54 (TYEC…PMEE) and 83–126 (VKTV…DKDK).

It belongs to the MraZ family. In terms of assembly, forms oligomers.

It localises to the cytoplasm. The protein resides in the nucleoid. The chain is Transcriptional regulator MraZ from Christiangramia forsetii (strain DSM 17595 / CGMCC 1.15422 / KT0803) (Gramella forsetii).